We begin with the raw amino-acid sequence, 501 residues long: Acyl-CoA-binding domain-containing protein 5A (501 aa).

The region spanning 9-98 (YEQRFNAAVK…LKLILESMPV (90 aa)) is the ACB domain. Residues 20 to 29 (IQNLPPNGSF), 40 to 44 (YSYYK), Lys66, and Tyr85 each bind an acyl-CoA. Residues 173 to 405 (IDLEDREDDD…GERWGADGPM (233 aa)) are disordered. A compositionally biased stretch (acidic residues) spans 176–195 (EDREDDDDEDEEGERDEVEE). Positions 219 to 235 (SNGSISQHKGLSNGTHG) are enriched in polar residues. 3 stretches are compositionally biased toward basic and acidic residues: residues 236 to 254 (SKSD…HMNH), 266 to 283 (NSEK…HVAS), and 328 to 366 (RSQD…KRSD). The segment covering 376-389 (SRSPASGSGSAGPQ) has biased composition (low complexity). Positions 406 to 437 (TENLNEQIICALARLQDDMQSVLQRLHTLEAL) form a coiled coil. A helical transmembrane segment spans residues 465–485 (WWPFDVSLGTVAFAVVWPFVV).

This sequence belongs to the ATG37 family.

It localises to the membrane. Its function is as follows. Acyl-CoA binding protein which acts as the peroxisome receptor for pexophagy but is dispensable for aggrephagy and nonselective autophagy. Binds medium- and long-chain acyl-CoA esters. The chain is Acyl-CoA-binding domain-containing protein 5A (acbd5a) from Danio rerio (Zebrafish).